The following is a 346-amino-acid chain: Alkanal monooxygenase alpha chain (346 aa).

In terms of assembly, heterodimer of an alpha and a beta chain.

The catalysed reaction is a long-chain fatty aldehyde + FMNH2 + O2 = a long-chain fatty acid + hnu + FMN + H2O + 2 H(+). In terms of biological role, light-emitting reaction in luminous bacteria. This chain is Alkanal monooxygenase alpha chain (luxA), found in Photobacterium phosphoreum.